The following is a 582-amino-acid chain: Protein alan shepard (582 aa).

Pro residues predominate over residues 1–12; the sequence is MHPRYSPAPPPQ. Positions 1 to 73 are disordered; sequence MHPRYSPAPP…AAPPTSRSAF (73 aa). At Tyr5 the chain carries Phosphotyrosine. Over residues 13–24 the composition is skewed to low complexity; it reads QQQQMGGPPHQQ. A compositionally biased stretch (gly residues) spans 25–35; sequence QGGGGGGGGSM. Residues 37 to 57 show a composition bias toward polar residues; the sequence is GPSNAQQLPPQIPRSQNYSNG. Residues 58-72 show a composition bias toward low complexity; that stretch reads SSSSAAAAPPTSRSA. Phosphotyrosine is present on residues Tyr125 and Tyr142. The tract at residues 164 to 225 is disordered; that stretch reads PATTTYGQRV…TVQNQNQQGG (62 aa). The segment covering 178 to 225 has biased composition (low complexity); the sequence is SPSNTNSSSSSNTGSQSGTLSTSLSNTTNTNTNMGPNGTVQNQNQQGG. 2 consecutive RRM domains span residues 231–304 and 310–389; these read TNLY…MAKQ and TNLY…FADG. Residues 555-582 form a disordered region; it reads PMTDSEQASTAASPDEAYTQYPHQAAPK.

Has a role in the perception of gravity. This chain is Protein alan shepard, found in Drosophila erecta (Fruit fly).